A 36-amino-acid chain; its full sequence is Dermonecrotic toxin LgSicTox-beta-LOXN2 (36 aa).

It belongs to the arthropod phospholipase D family. Class II subfamily. Mg(2+) serves as cofactor. Contains 2 disulfide bonds. In terms of tissue distribution, expressed by the venom gland.

The protein resides in the secreted. The enzyme catalyses an N-(acyl)-sphingosylphosphocholine = an N-(acyl)-sphingosyl-1,3-cyclic phosphate + choline. It carries out the reaction an N-(acyl)-sphingosylphosphoethanolamine = an N-(acyl)-sphingosyl-1,3-cyclic phosphate + ethanolamine. It catalyses the reaction a 1-acyl-sn-glycero-3-phosphocholine = a 1-acyl-sn-glycero-2,3-cyclic phosphate + choline. The catalysed reaction is a 1-acyl-sn-glycero-3-phosphoethanolamine = a 1-acyl-sn-glycero-2,3-cyclic phosphate + ethanolamine. Its function is as follows. Dermonecrotic toxins cleave the phosphodiester linkage between the phosphate and headgroup of certain phospholipids (sphingolipid and lysolipid substrates), forming an alcohol (often choline) and a cyclic phosphate. This toxin acts on sphingomyelin (SM). It may also act on ceramide phosphoethanolamine (CPE), lysophosphatidylcholine (LPC) and lysophosphatidylethanolamine (LPE), but not on lysophosphatidylserine (LPS), and lysophosphatidylglycerol (LPG). It acts by transphosphatidylation, releasing exclusively cyclic phosphate products as second products. Induces dermonecrosis, hemolysis, increased vascular permeability, edema, inflammatory response, and platelet aggregation. The sequence is that of Dermonecrotic toxin LgSicTox-beta-LOXN2 from Loxosceles gaucho (Spider).